We begin with the raw amino-acid sequence, 62 residues long: Large ribosomal subunit protein uL29 (62 aa).

This sequence belongs to the universal ribosomal protein uL29 family.

This Oleidesulfovibrio alaskensis (strain ATCC BAA-1058 / DSM 17464 / G20) (Desulfovibrio alaskensis) protein is Large ribosomal subunit protein uL29.